Here is a 374-residue protein sequence, read N- to C-terminus: Glutamate 5-kinase (374 aa).

Lysine 16 contributes to the ATP binding site. Serine 56, aspartate 143, and asparagine 155 together coordinate substrate. 175-176 (TD) is a binding site for ATP. In terms of domain architecture, PUA spans 282-360 (KGCFVVDEGA…TRIEEILGYV (79 aa)).

The protein belongs to the glutamate 5-kinase family.

It localises to the cytoplasm. It catalyses the reaction L-glutamate + ATP = L-glutamyl 5-phosphate + ADP. Its pathway is amino-acid biosynthesis; L-proline biosynthesis; L-glutamate 5-semialdehyde from L-glutamate: step 1/2. Catalyzes the transfer of a phosphate group to glutamate to form L-glutamate 5-phosphate. The sequence is that of Glutamate 5-kinase from Methylococcus capsulatus (strain ATCC 33009 / NCIMB 11132 / Bath).